Reading from the N-terminus, the 350-residue chain is Ribosomal RNA large subunit methyltransferase Cfr (350 aa).

Glu92 functions as the Proton acceptor in the catalytic mechanism. Positions 99–333 (EAGWESFCIS…VTIRSQFGRE (235 aa)) constitute a Radical SAM core domain. A disulfide bond links Cys106 and Cys338. [4Fe-4S] cluster-binding residues include Cys113, Cys117, and Cys120. Residues 159–160 (GE), Ser190, 213–215 (SLH), and Asn293 each bind S-adenosyl-L-methionine. Cys338 acts as the S-methylcysteine intermediate in catalysis.

The protein belongs to the radical SAM superfamily. RlmN family. Cfr subfamily. It depends on [4Fe-4S] cluster as a cofactor.

The protein localises to the cytoplasm. It carries out the reaction adenosine(2503) in 23S rRNA + 2 reduced [2Fe-2S]-[ferredoxin] + 2 S-adenosyl-L-methionine = 8-methyladenosine(2503) in 23S rRNA + 5'-deoxyadenosine + L-methionine + 2 oxidized [2Fe-2S]-[ferredoxin] + S-adenosyl-L-homocysteine. In terms of biological role, specifically methylates position 8 of adenine 2503 in 23S rRNA. Confers resistance to some classes of antibiotics. This Shouchella clausii (strain KSM-K16) (Alkalihalobacillus clausii) protein is Ribosomal RNA large subunit methyltransferase Cfr.